The primary structure comprises 315 residues: Glutathione synthetase (315 aa).

An ATP-grasp domain is found at 125–310 (KLYTAWFADL…ITGMLMDAIE (186 aa)). 151–207 (WEKHGDIIMKPLDGMGGASIFRVKEGDPNIGVIAETLTELGNRYCMAQNYLPAIKDG) contributes to the ATP binding site. Mg(2+) is bound by residues Glu-281 and Asn-283.

The protein belongs to the prokaryotic GSH synthase family. Requires Mg(2+) as cofactor. Mn(2+) serves as cofactor.

It carries out the reaction gamma-L-glutamyl-L-cysteine + glycine + ATP = glutathione + ADP + phosphate + H(+). It participates in sulfur metabolism; glutathione biosynthesis; glutathione from L-cysteine and L-glutamate: step 2/2. The sequence is that of Glutathione synthetase from Salmonella typhimurium (strain LT2 / SGSC1412 / ATCC 700720).